Reading from the N-terminus, the 321-residue chain is Mitochondrial thiamine pyrophosphate carrier 1 (321 aa).

3 Solcar repeats span residues 12 to 110, 121 to 207, and 216 to 311; these read GSRQ…ISQM, PSSA…LKPV, and PLGS…AMGI. The next 6 helical transmembrane spans lie at 17–38, 91–107, 127–147, 182–199, 213–231, and 286–303; these read VVVAGAAAGLVSRFVIAPLDVI, LLYLTYGSVQFSAYTNI, FISGAGAGAAATTVTYPLDLL, GLGAGVSQIVPYMGLFFA, LPLPLGSSDAVAGVVASVV, and GLTVSLLKAAPASAVTMW.

This sequence belongs to the mitochondrial carrier (TC 2.A.29) family.

The protein resides in the mitochondrion inner membrane. Mitochondrial transporter that mediates uptake of thiamine pyrophosphate (ThPP) into mitochondria. The protein is Mitochondrial thiamine pyrophosphate carrier 1 (TPC1) of Phaeosphaeria nodorum (strain SN15 / ATCC MYA-4574 / FGSC 10173) (Glume blotch fungus).